The primary structure comprises 722 residues: Dual specificity tyrosine-phosphorylation-regulated kinase 2 (722 aa).

The residue at position 25 (Ser25) is a Phosphoserine. The interval 54 to 127 (TTTSLNGNGN…SGELKCNTPM (74 aa)) is disordered. Positions 66 to 119 (GNSNSNNNNNIGSPVSSSTTNSSNGGNERGSSTKSNSSSGSGSSGNSASSTGSG) are enriched in low complexity. The Protein kinase domain occupies 198-494 (YEILEVIGKG…PDEAAHHEFL (297 aa)). ATP is bound by residues 204–212 (IGKGSFGQV) and Lys227. The active-site Proton acceptor is Asp324. A phosphotyrosine; by autocatalysis mark is found at Tyr356 and Tyr358. Disordered regions lie at residues 494 to 519 (LQPSASSRHRSCRMSSSSSSSGLNSV), 557 to 582 (TTKSRQQPPSQSHGHAQSNGHLPDIK), 624 to 643 (GSGSTHHVSSAATRKHLPGT), and 679 to 722 (TTTH…FGRA). Residues 506–519 (RMSSSSSSSGLNSV) are compositionally biased toward low complexity. Polar residues predominate over residues 557-576 (TTKSRQQPPSQSHGHAQSNG). Low complexity-rich tracts occupy residues 626–635 (GSTHHVSSAA) and 689–707 (GQQQQQSSSGASTMAMSHS).

Belongs to the protein kinase superfamily. CMGC Ser/Thr protein kinase family. MNB/DYRK subfamily. Mg(2+) is required as a cofactor. In terms of processing, phosphorylated on serine/threonine residues.

It localises to the cytoplasm. It carries out the reaction L-seryl-[protein] + ATP = O-phospho-L-seryl-[protein] + ADP + H(+). The enzyme catalyses L-threonyl-[protein] + ATP = O-phospho-L-threonyl-[protein] + ADP + H(+). It catalyses the reaction L-tyrosyl-[protein] + ATP = O-phospho-L-tyrosyl-[protein] + ADP + H(+). Autophosphorylates on Tyr-356 and Tyr-358. In terms of biological role, in vitro; can phosphorylate exogenous substrates on Ser and Thr residues. May have a physiological role in development being involved in cellular growth and differentiation. This is Dual specificity tyrosine-phosphorylation-regulated kinase 2 from Drosophila melanogaster (Fruit fly).